The primary structure comprises 286 residues: 4-hydroxybenzoate octaprenyltransferase (286 aa).

A run of 7 helical transmembrane segments spans residues 21 to 40 (GTLL…AGGM), 95 to 115 (ILFV…NGLV), 142 to 162 (FLGI…TGEV), 167 to 187 (WWLF…YAMV), 210 to 230 (QIIG…GWSA), 235 to 255 (LYGL…MLIF), and 266 to 286 (FLNN…DYLI).

It belongs to the UbiA prenyltransferase family. The cofactor is Mg(2+).

The protein localises to the cell inner membrane. The enzyme catalyses all-trans-octaprenyl diphosphate + 4-hydroxybenzoate = 4-hydroxy-3-(all-trans-octaprenyl)benzoate + diphosphate. Its pathway is cofactor biosynthesis; ubiquinone biosynthesis. In terms of biological role, catalyzes the prenylation of para-hydroxybenzoate (PHB) with an all-trans polyprenyl group. Mediates the second step in the final reaction sequence of ubiquinone-8 (UQ-8) biosynthesis, which is the condensation of the polyisoprenoid side chain with PHB, generating the first membrane-bound Q intermediate 3-octaprenyl-4-hydroxybenzoate. The protein is 4-hydroxybenzoate octaprenyltransferase of Shewanella baltica (strain OS185).